The following is a 2446-amino-acid chain: Transcription factor HIVEP2 (2446 aa).

The tract at residues 1–93 is disordered; that stretch reads MDTGDTALGQ…YPPHRPSPYS (93 aa). The span at 17 to 28 shows a compositional bias: basic and acidic residues; it reads GETDKASGRWRQ. 2 C2H2-type zinc fingers span residues 189–211 and 217–239; these read YICPYCSRACAKPSVLKKHIRSH and YPCIPCGFSFKTKSNLYKHRKSH. Disordered stretches follow at residues 272–303, 340–416, 543–563, and 751–985; these read HSDGEQSTDTDEESSLFAEASDKMSPGPPIPL, ESSQ…PPNT, SNSVPTSSATNLTIPPSLRGS, and SHGH…SFER. 2 stretches are compositionally biased toward polar residues: residues 381-416 and 543-556; these read SEPSLNLLSPHSKGSTDSGYFSRSESAEQQISPPNT and SNSVPTSSATNLTI. The span at 751 to 760 shows a compositional bias: basic and acidic residues; the sequence is SHGHTERFDP. A compositionally biased stretch (polar residues) spans 766–777; sequence QPGSPSLVSEES. Residues 782–791 show a composition bias toward basic and acidic residues; the sequence is DSDKMSDLGG. Residues 800 to 812 show a composition bias toward polar residues; that stretch reads SVIQHTNSLSRPN. At Ser819 the chain carries Phosphoserine. Residues 863–878 show a composition bias toward low complexity; that stretch reads PSPSQQVQQQSYHTQP. Residues 892 to 916 are compositionally biased toward basic and acidic residues; sequence RVTEEPDKPEKEKEAQSKEPEKPVE. A Nuclear localization signal motif is present at residues 937–943; that stretch reads PKKKRLR. A phosphoserine mark is found at Ser950, Ser955, Ser1048, Ser1443, and Ser1447. Residues 952–982 show a composition bias toward low complexity; sequence GESSFESTGTGLSRSPSQESNLSHSSSFSMS. A disordered region spans residues 1485-1603; it reads KDLSRPQKPQ…LEEEGKGHKR (119 aa). Composition is skewed to low complexity over residues 1510–1533 and 1576–1586; these read SGSSSFSSLSPSSSQDYPSVSPSS and SDMSMSPQSSS. 2 consecutive C2H2-type zinc fingers follow at residues 1799–1821 and 1827–1851; these read YICEECGIRCKKPSMLKKHIRTH and YVCKLCNFAFKTKGNLTKHMKSKAH. Disordered regions lie at residues 1882–1951 and 2024–2129; these read AAEK…VNVG and EECM…RRDL. The span at 1899-1925 shows a compositional bias: acidic residues; sequence DAEESDGEDGDDNDDDDEDEDDFDDQG. Residues 2029-2053 are compositionally biased toward low complexity; that stretch reads PSEPSSSPRDFSPSSHHSSPGYDSS. A run of 10 repeats spans residues 2053-2056, 2059-2062, 2071-2074, 2083-2086, 2089-2092, 2106-2109, 2112-2115, 2118-2121, 2130-2133, and 2145-2148. A 10 X 4 AA tandem repeats of S-P-[RGMKC]-[RK] region spans residues 2053–2148; the sequence is SPCRDNSPKR…TTIRAPSPRR (96 aa). Residues 2078–2107 are compositionally biased toward basic and acidic residues; the sequence is PRRDLSPMRHLSPRKEAALRREMSQRDVSP. Ser2118 is modified (phosphoserine). 3 disordered regions span residues 2242–2325, 2371–2403, and 2423–2446; these read PALS…QEEN, HFSRPEPGQPCTSATHPDLHDGEKDNFGTSQTP, and HSSKELSSSTEESKDPSSEKSQLH. Ser2297 and Ser2301 each carry phosphoserine. Polar residues predominate over residues 2307–2317; that stretch reads KQSTSEDSLNA. Basic and acidic residues predominate over residues 2387–2396; it reads PDLHDGEKDN. Phosphoserine occurs at positions 2429 and 2431. A compositionally biased stretch (basic and acidic residues) spans 2433-2446; sequence EESKDPSSEKSQLH.

In terms of assembly, interacts with TCF4. Expressed in brain and skeletal muscle.

The protein resides in the nucleus. Functionally, this protein specifically binds to the DNA sequence 5'-GGGACTTTCC-3' which is found in the enhancer elements of numerous viral promoters such as those of SV40, CMV, or HIV1. In addition, related sequences are found in the enhancer elements of a number of cellular promoters, including those of the class I MHC, interleukin-2 receptor, somatostatin receptor II, and interferon-beta genes. It may act in T-cell activation. The sequence is that of Transcription factor HIVEP2 (HIVEP2) from Homo sapiens (Human).